We begin with the raw amino-acid sequence, 204 residues long: Somatotropin (204 aa).

The N-terminal stretch at 1 to 17 is a signal peptide; sequence MDRVLLLLSVLTLGVSS. At Q18 the chain carries Pyrrolidone carboxylic acid. H36 lines the Zn(2+) pocket. An intrachain disulfide couples C69 to C177. E186 is a Zn(2+) binding site. C194 and C202 are disulfide-bonded.

The protein belongs to the somatotropin/prolactin family.

The protein resides in the secreted. In terms of biological role, growth hormone plays an important role in growth control and is involved in the regulation of several anabolic processes. Implicated as an osmoregulatory substance important for seawater adaptation. The chain is Somatotropin (gh) from Larimichthys crocea (Large yellow croaker).